Here is a 46-residue protein sequence, read N- to C-terminus: Photosystem II reaction center protein K (46 aa).

Residues 1–9 constitute a propeptide that is removed on maturation; that stretch reads MIDALVLVA. Residues 10–19 are Lumenal-facing; sequence KLPEAYAIFD. The chain crosses the membrane as a helical span at residues 20–39; sequence PLVDVLPVIPVLFLALAFVW. The Cytoplasmic portion of the chain corresponds to 40-46; it reads QAAVGFR.

The protein belongs to the PsbK family. As to quaternary structure, PSII is composed of 1 copy each of membrane proteins PsbA, PsbB, PsbC, PsbD, PsbE, PsbF, PsbH, PsbI, PsbJ, PsbK, PsbL, PsbM, PsbT, PsbX, PsbY, PsbZ, Psb30/Ycf12, peripheral proteins PsbO, CyanoQ(PsbQ), PsbU, PsbV and a large number of cofactors. It forms dimeric complexes. Part of a photosystem II (PSII) assembly intermediate complex PSII-I; crystallized from a strain deleted of psbJ, it forms monomeric PSII before addition of the oxygen evolving complex. PSII-I includes 3 assembly factors not found in mature PSII (Psb27, Psb28 and Psb34). It depends on PSII binds multiple chlorophylls, carotenoids and specific lipids. as a cofactor.

It is found in the cellular thylakoid membrane. In terms of biological role, one of the components of the core complex of photosystem II (PSII). PSII is a light-driven water:plastoquinone oxidoreductase that uses light energy to abstract electrons from H(2)O, generating O(2) and a proton gradient subsequently used for ATP formation. It consists of a core antenna complex that captures photons, and an electron transfer chain that converts photonic excitation into a charge separation. Required for association of PsbZ and Psb30/Ycf12 with PSII. The polypeptide is Photosystem II reaction center protein K (Thermosynechococcus vestitus (strain NIES-2133 / IAM M-273 / BP-1)).